The primary structure comprises 1449 residues: DNA polymerase III PolC-type (1449 aa).

A disordered region spans residues 194-231 (AQEKPVKKESSDNKHKSNGGNKGGYEKKSYKDEPKNEN). Composition is skewed to basic and acidic residues over residues 197–208 (KPVKKESSDNKH) and 217–229 (GYEK…EPKN). An Exonuclease domain is found at 435 to 590 (YVVFDIETTG…DDAKATAEIL (156 aa)).

The protein belongs to the DNA polymerase type-C family. PolC subfamily.

It is found in the cytoplasm. The enzyme catalyses DNA(n) + a 2'-deoxyribonucleoside 5'-triphosphate = DNA(n+1) + diphosphate. Required for replicative DNA synthesis. This DNA polymerase also exhibits 3' to 5' exonuclease activity. This chain is DNA polymerase III PolC-type, found in Clostridium perfringens (strain 13 / Type A).